Here is a 239-residue protein sequence, read N- to C-terminus: Adapter protein MecA (239 aa).

Over residues 118–128 (EQRTKEKEAQG) the composition is skewed to basic and acidic residues. A disordered region spans residues 118–137 (EQRTKEKEAQGSKRQKSSAR).

Belongs to the MecA family. Homodimer.

Enables the recognition and targeting of unfolded and aggregated proteins to the ClpC protease or to other proteins involved in proteolysis. This Staphylococcus aureus (strain USA300) protein is Adapter protein MecA.